A 751-amino-acid chain; its full sequence is Semaphorin-3C (751 aa).

The signal sequence occupies residues 1-21 (MAVLALHAVFGIFIYFSSVKG). One can recognise a Sema domain in the interval 28 to 511 (RVFLTFNELQ…SEEGVTQVPL (484 aa)). A glycan (N-linked (GlcNAc...) asparagine) is linked at Asn-81. A disulfide bridge links Cys-101 with Cys-112. A glycan (N-linked (GlcNAc...) asparagine) is linked at Asn-123. 3 disulfides stabilise this stretch: Cys-130–Cys-139, Cys-266–Cys-378, and Cys-290–Cys-338. N-linked (GlcNAc...) asparagine glycosylation is present at Asn-268. A glycan (N-linked (GlcNAc...) asparagine) is linked at Asn-465. A disulfide bridge connects residues Cys-514 and Cys-532. The 85-residue stretch at 571–655 (AYRNAAETVQ…TENNFKQTLA (85 aa)) folds into the Ig-like C2-type domain. N-linked (GlcNAc...) asparagine glycans are attached at residues Asn-585 and Asn-586. A disulfide bridge connects residues Cys-643 and Cys-709. The segment covering 712-731 (SRQQGQRREEPQKMRGDYSK) has biased composition (basic and acidic residues). Positions 712–751 (SRQQGQRREEPQKMRGDYSKLKALINSRKSRNRRNQLPAS) are disordered.

It belongs to the semaphorin family. As to expression, collapsin-1, -2, -3, and -5 bind to overlapping but distinct axon tracts.

The protein resides in the secreted. Its function is as follows. Induces the collapse and paralysis of neuronal growth cones. Could potentially act as repulsive cues toward specific neuronal populations. Binds to neuropilin. This is Semaphorin-3C (SEMA3C) from Gallus gallus (Chicken).